Reading from the N-terminus, the 840-residue chain is Probable inorganic carbon transporter subunit DabA (840 aa).

Residues Cys-355, Asp-357, His-539, and Cys-554 each coordinate Zn(2+).

Belongs to the inorganic carbon transporter (TC 9.A.2) DabA family. As to quaternary structure, forms a complex with DabB. Zn(2+) serves as cofactor.

The protein resides in the cell membrane. In terms of biological role, part of an energy-coupled inorganic carbon pump. This is Probable inorganic carbon transporter subunit DabA from Roseiflexus castenholzii (strain DSM 13941 / HLO8).